A 519-amino-acid chain; its full sequence is Bifunctional dihydrofolate reductase-thymidylate synthase 1 (519 aa).

Ala-2 carries the post-translational modification N-acetylalanine. The 178-residue stretch at 21-198 (TYQVVVAATK…LRFCFTTFVR (178 aa)) folds into the DHFR domain. Val-25 serves as a coordination point for substrate. Residues Ala-27 and 33–39 (GIGKDGK) each bind NADP(+). Asp-47 contributes to the substrate binding site. NADP(+) is bound by residues 71–73 (RKT) and 92–95 (LTRS). Ile-134 is a binding site for substrate. Residue 135–142 (GGGDILRE) participates in NADP(+) binding. Thr-155 is a substrate binding site. The interval 201–234 (SSADESSDESNGSQSLQFDGKKFLFLPKMVFDQH) is hinge. A thymidylate synthase region spans residues 235-519 (EEFLYLNMVE…HKKIEMKMAV (285 aa)). Residue Arg-256 coordinates dUMP. Residue Cys-401 is part of the active site. DUMP-binding positions include His-402, 420-424 (QRSAD), Asn-432, and 462-464 (HVY).

It in the N-terminal section; belongs to the dihydrofolate reductase family. In the C-terminal section; belongs to the thymidylate synthase family. In terms of assembly, heterodimer or homodimer.

The enzyme catalyses (6S)-5,6,7,8-tetrahydrofolate + NADP(+) = 7,8-dihydrofolate + NADPH + H(+). It carries out the reaction dUMP + (6R)-5,10-methylene-5,6,7,8-tetrahydrofolate = 7,8-dihydrofolate + dTMP. It participates in cofactor biosynthesis; tetrahydrofolate biosynthesis; 5,6,7,8-tetrahydrofolate from 7,8-dihydrofolate: step 1/1. Functionally, bifunctional enzyme. Involved in de novo dTMP biosynthesis. Key enzyme in folate metabolism. Can play two different roles depending on the source of dihydrofolate: de novo synthesis of tetrahydrofolate or recycling of the dihydrofolate released as one of the end products of the TS catalyzed reaction. Catalyzes an essential reaction for de novo glycine and purine synthesis, DNA precursor synthesis, and for the conversion of dUMP to dTMP. The sequence is that of Bifunctional dihydrofolate reductase-thymidylate synthase 1 (THY-1) from Arabidopsis thaliana (Mouse-ear cress).